Consider the following 366-residue polypeptide: tRNA/tmRNA (uracil-C(5))-methyltransferase (366 aa).

S-adenosyl-L-methionine-binding residues include Q190, Y218, N223, E239, and D299. The active-site Nucleophile is C324. The Proton acceptor role is filled by E358.

This sequence belongs to the class I-like SAM-binding methyltransferase superfamily. RNA M5U methyltransferase family. TrmA subfamily.

It carries out the reaction uridine(54) in tRNA + S-adenosyl-L-methionine = 5-methyluridine(54) in tRNA + S-adenosyl-L-homocysteine + H(+). The catalysed reaction is uridine(341) in tmRNA + S-adenosyl-L-methionine = 5-methyluridine(341) in tmRNA + S-adenosyl-L-homocysteine + H(+). In terms of biological role, dual-specificity methyltransferase that catalyzes the formation of 5-methyluridine at position 54 (m5U54) in all tRNAs, and that of position 341 (m5U341) in tmRNA (transfer-mRNA). The sequence is that of tRNA/tmRNA (uracil-C(5))-methyltransferase from Salmonella paratyphi C (strain RKS4594).